A 135-amino-acid chain; its full sequence is Small ribosomal subunit protein uS11 (135 aa).

It belongs to the universal ribosomal protein uS11 family. As to quaternary structure, part of the 30S ribosomal subunit. Interacts with proteins S7 and S18. Binds to IF-3.

Its function is as follows. Located on the platform of the 30S subunit, it bridges several disparate RNA helices of the 16S rRNA. Forms part of the Shine-Dalgarno cleft in the 70S ribosome. The polypeptide is Small ribosomal subunit protein uS11 (Solibacter usitatus (strain Ellin6076)).